The primary structure comprises 65 residues: Large ribosomal subunit protein uL30 (65 aa).

The protein belongs to the universal ribosomal protein uL30 family. Part of the 50S ribosomal subunit.

The polypeptide is Large ribosomal subunit protein uL30 (Onion yellows phytoplasma (strain OY-M)).